A 384-amino-acid polypeptide reads, in one-letter code: tRNA(Met) cytidine acetate ligase (384 aa).

Residues 7–20 (VAEYNPFHSGHEFL), Gly-101, Asn-153, and Arg-178 contribute to the ATP site.

This sequence belongs to the TmcAL family.

Its subcellular location is the cytoplasm. The enzyme catalyses cytidine(34) in elongator tRNA(Met) + acetate + ATP = N(4)-acetylcytidine(34) in elongator tRNA(Met) + AMP + diphosphate. In terms of biological role, catalyzes the formation of N(4)-acetylcytidine (ac(4)C) at the wobble position of elongator tRNA(Met), using acetate and ATP as substrates. First activates an acetate ion to form acetyladenylate (Ac-AMP) and then transfers the acetyl group to tRNA to form ac(4)C34. This chain is tRNA(Met) cytidine acetate ligase, found in Lactobacillus delbrueckii subsp. bulgaricus (strain ATCC BAA-365 / Lb-18).